A 365-amino-acid polypeptide reads, in one-letter code: Coxsackievirus and adenovirus receptor homolog (365 aa).

An N-terminal signal peptide occupies residues 1–19 (MALLLCFVLLCGVADFTSS). 2 Ig-like C2-type domains span residues 20–136 (LSIT…FLLT) and 141–228 (PSGT…LRLD). The Extracellular portion of the chain corresponds to 20–238 (LSITTPEQRI…VVPPSNRAGT (219 aa)). 3 disulfides stabilise this stretch: cysteine 41/cysteine 120, cysteine 146/cysteine 223, and cysteine 162/cysteine 212. N-linked (GlcNAc...) asparagine glycosylation is present at asparagine 106. The chain crosses the membrane as a helical span at residues 239-259 (IAGAVIGTLLALVLIGAILFC). S-palmitoyl cysteine attachment occurs at residues cysteine 259 and cysteine 260. The Cytoplasmic segment spans residues 260 to 365 (CHKKRREEKY…PAQSKDGSIV (106 aa)). Basic and acidic residues predominate over residues 269-282 (YEKEVHHDIREDVP). A disordered region spans residues 269–315 (YEKEVHHDIREDVPPPKSRTSTARSYIGSNHSSLGSMSPSNMEGYSK). A compositionally biased stretch (polar residues) spans 286–315 (SRTSTARSYIGSNHSSLGSMSPSNMEGYSK). 6 positions are modified to phosphoserine: serine 297, serine 304, serine 306, serine 323, serine 332, and serine 363. The PDZ-binding motif lies at 360–365 (KDGSIV).

As to quaternary structure, monomer. May form homodimer. Interacts with LNX, MAGI1, DLG4, PRKCABP, TJP1 and CTNNB1. Interacts with MPDZ; recruits MPDZ to intercellular contact sites. Interacts with JAML (homodimeric form). N-glycosylated. Post-translationally, palmitoylated on Cys-259 and/or Cys-260; required for proper localization to the plasma membrane. Expressed in heart, brain, spleen, lung, liver, muscle, kidney, testis, spleen and skeletal muscle.

It is found in the cell membrane. Its subcellular location is the basolateral cell membrane. It localises to the cell junction. The protein resides in the tight junction. The protein localises to the adherens junction. Functionally, component of the epithelial apical junction complex that may function as a homophilic cell adhesion molecule and is essential for tight junction integrity. Also involved in transepithelial migration of leukocytes through adhesive interactions with JAML a transmembrane protein of the plasma membrane of leukocytes. The interaction between both receptors also mediates the activation of gamma-delta T-cells, a subpopulation of T-cells residing in epithelia and involved in tissue homeostasis and repair. Upon epithelial CXADR-binding, JAML induces downstream cell signaling events in gamma-delta T-cells through PI3-kinase and MAP kinases. It results in proliferation and production of cytokines and growth factors by T-cells that in turn stimulate epithelial tissues repair. The chain is Coxsackievirus and adenovirus receptor homolog (Cxadr) from Rattus norvegicus (Rat).